Here is a 201-residue protein sequence, read N- to C-terminus: Phospholipase A2 inhibitor PIP (201 aa).

The N-terminal stretch at Met-1–Ser-19 is a signal peptide. Intrachain disulfides connect Cys-22–Cys-46, Cys-25–Cys-32, Cys-39–Cys-67, Cys-73–Cys-94, Cys-95–Cys-100, Cys-118–Cys-143, Cys-136–Cys-165, and Cys-169–Cys-191. Asn-157 carries an N-linked (GlcNAc...) asparagine glycan.

In terms of assembly, homohexamer. Glycosylated. In terms of tissue distribution, expressed by the liver.

Its subcellular location is the secreted. Inhibits the enzymatic activity of phospholipase A2 (PA2). Binds to the major PLA2 toxin of D.russelli siamensis (Daboiatoxin, AC Q7T2R1, and AC Q7T3T5) at 1-2-fold molar excess of inhibitor to toxin. It exhibits broad spectra in neutralizing the toxicity of various snake venoms and toxins and inhibits the formation of edema in mice. May bind to PLA2 through its proline-rich hydrophobic core region. The protein is Phospholipase A2 inhibitor PIP of Malayopython reticulatus (Reticulate python).